The chain runs to 184 residues: GTP cyclohydrolase 1 (184 aa).

Zn(2+) is bound by residues Cys-75, His-78, and Cys-146.

The protein belongs to the GTP cyclohydrolase I family. As to quaternary structure, toroid-shaped homodecamer, composed of two pentamers of five dimers.

The catalysed reaction is GTP + H2O = 7,8-dihydroneopterin 3'-triphosphate + formate + H(+). The protein operates within cofactor biosynthesis; 7,8-dihydroneopterin triphosphate biosynthesis; 7,8-dihydroneopterin triphosphate from GTP: step 1/1. This is GTP cyclohydrolase 1 from Streptococcus pneumoniae serotype 2 (strain D39 / NCTC 7466).